We begin with the raw amino-acid sequence, 147 residues long: Leghemoglobin 8 (147 aa).

Positions 2-147 (GFTEKQESLV…LAASIKKSMS (146 aa)) constitute a Globin domain. 2 positions are modified to nitrated tyrosine: Tyr25 and Tyr30. Ser45 serves as a coordination point for heme b. Residue Ser45 is modified to Phosphoserine. His62 provides a ligand contact to O2. Lys65, His94, and Lys97 together coordinate heme b. A Nitrated tyrosine modification is found at Tyr135.

This sequence belongs to the plant globin family. In terms of assembly, monomer. Interacts with CAS31 in the cytoplasm; this interaction leads to its protection from denaturation under thermal and drought stresses. In terms of processing, nitrated in effective nodules and particularly in hypoxic conditions; this mechanism may play a protective role in the symbiosis by buffering toxic peroxynitrite NO(2)(-). Nitration level decrease during nodule senescence. Post-translationally, phosphorylation at Ser-45 disrupts the molecular environment of its porphyrin ring oxygen binding pocket, thus leading to a reduced oxygen consumption and to the delivery of oxygen O(2) to symbiosomes. As to expression, root nodules.

It localises to the cytoplasm. It is found in the nucleus. Leghemoglobin that reversibly binds oxygen O(2) through a pentacoordinated heme iron. In root nodules, facilitates the diffusion of oxygen to the bacteroids while preventing the bacterial nitrogenase from being inactivated by buffering dioxygen, nitric oxide and carbon monoxide, and promoting the formation of reactive oxygen species (ROS, e.g. H(2)O(2)). This role is essential for symbiotic nitrogen fixation (SNF). The protein is Leghemoglobin 8 of Medicago truncatula (Barrel medic).